A 438-amino-acid chain; its full sequence is Exoglucanase 3 (438 aa).

Residues 1-20 (MFKFAALLALASLVPGFVQA) form the signal peptide. A CBM1 domain is found at 21–59 (QSPVWGQCGGNGWTGPTTCASGSTCVKQNDFYSQCLPNN). 2 disulfides stabilise this stretch: Cys-28-Cys-45 and Cys-39-Cys-55. The segment at 57 to 90 (PNNQAPPSTTTQPGTTPPATTTSGGTGPTSGAGN) is disordered. Residues 60 to 87 (QAPPSTTTQPGTTPPATTTSGGTGPTSG) form a linker region. Residues 61–79 (APPSTTTQPGTTPPATTTS) are compositionally biased toward low complexity. Residues 88–438 (AGNPYTGKTV…TLVANANPAL (351 aa)) are catalytic. Intrachain disulfides connect Cys-170/Cys-229 and Cys-360/Cys-407. Asp-215 serves as the catalytic Proton donor. The Nucleophile role is filled by Asp-393.

It belongs to the glycosyl hydrolase 6 (cellulase B) family.

It carries out the reaction Hydrolysis of (1-&gt;4)-beta-D-glucosidic linkages in cellulose and cellotetraose, releasing cellobiose from the non-reducing ends of the chains.. In terms of biological role, shows enzymatic activity towards crystalline cellulose. At long reaction times. It is also able to degrade carboxymethyl cellulose and barley B-glucan. This chain is Exoglucanase 3 (cel3), found in Agaricus bisporus (White button mushroom).